The following is a 308-amino-acid chain: Acetyl-coenzyme A carboxylase carboxyl transferase subunit beta 1 (308 aa).

A CoA carboxyltransferase N-terminal domain is found at 25-294; sequence VWTKCTSCEQ…PMVVSVNESP (270 aa). Residues cysteine 29, cysteine 32, cysteine 48, and cysteine 51 each contribute to the Zn(2+) site. Residues 29–51 form a C4-type zinc finger; sequence CTSCEQVLYHAELERNLEVCPKC. Residues 289-308 form a disordered region; the sequence is SVNESPNEEPYSVPEADEKG.

It belongs to the AccD/PCCB family. In terms of assembly, acetyl-CoA carboxylase is a heterohexamer composed of biotin carboxyl carrier protein (AccB), biotin carboxylase (AccC) and two subunits each of ACCase subunit alpha (AccA) and ACCase subunit beta (AccD). Zn(2+) is required as a cofactor.

The protein localises to the cytoplasm. The catalysed reaction is N(6)-carboxybiotinyl-L-lysyl-[protein] + acetyl-CoA = N(6)-biotinyl-L-lysyl-[protein] + malonyl-CoA. Its pathway is lipid metabolism; malonyl-CoA biosynthesis; malonyl-CoA from acetyl-CoA: step 1/1. Component of the acetyl coenzyme A carboxylase (ACC) complex. Biotin carboxylase (BC) catalyzes the carboxylation of biotin on its carrier protein (BCCP) and then the CO(2) group is transferred by the transcarboxylase to acetyl-CoA to form malonyl-CoA. In Vibrio campbellii (strain ATCC BAA-1116), this protein is Acetyl-coenzyme A carboxylase carboxyl transferase subunit beta 1.